A 1312-amino-acid chain; its full sequence is DNA repair protein RAD50.L (1312 aa).

Positions 13, 38, 39, 41, 42, 43, 44, 67, 69, and 159 each coordinate ATP. Thr43 contacts Mg(2+). Gln159 serves as a coordination point for Mg(2+). Coiled coils occupy residues 203–342 (VREY…LNRE), 415–558 (LREF…IKSR), and 587–628 (INQT…FEEK). Residues 635 to 734 (SQDFDSDLSR…RKDDMMELKP (100 aa)) form the Zinc-hook domain. Zn(2+) is bound by residues Cys681 and Cys684. Residues 712 to 1070 (LKSAEGELKR…ENKSESLKTN (359 aa)) adopt a coiled-coil conformation.

It belongs to the SMC family. RAD50 subfamily. Component of the MRN complex composed of two heterodimers RAD50 and MRE11 associated with a single NBN. The cofactor is Zn(2+).

It localises to the nucleus. It is found in the chromosome. The protein localises to the telomere. The enzyme catalyses ATP + H2O = ADP + phosphate + H(+). Component of the MRN complex, which plays a central role in double-strand break (DSB) repair, DNA recombination, maintenance of telomere integrity and meiosis. The MRN complex is involved in the repair of DNA double-strand breaks (DSBs) via homologous recombination (HR), an error-free mechanism which primarily occurs during S and G2 phases. The complex (1) mediates the end resection of damaged DNA, which generates proper single-stranded DNA, a key initial steps in HR, and is (2) required for the recruitment of other repair factors and efficient activation of ATM and ATR upon DNA damage. The MRN complex possesses single-strand endonuclease activity and double-strand-specific 3'-5' exonuclease activity, which are provided by mre11, to initiate end resection, which is required for single-strand invasion and recombination. Within the complex, rad50 is both required to bind DNA ends and hold them in close proximity and regulate the activity of MRE11. Rad50 provides an ATP-dependent control of MRE11 by positioning DNA ends into the mre11 active site: ATP-binding induces a large structural change from an open form with accessible MRE11 nuclease sites into a closed form. The MRN complex is also required for DNA damage signaling via activation of the atm and atr kinases: the nuclease activity of mre11 is not required to activate ATM and ATR. The MRN complex promotes recruitment of topbp1 to DNA damage sites. The MRN complex and rbbp8/CtIP are also required for chromosome alignment during metaphase. In Xenopus laevis (African clawed frog), this protein is DNA repair protein RAD50.L.